The following is a 125-amino-acid chain: Snaclec alboaggregin-A subunit beta (125 aa).

Residues 1–125 form the C-type lectin domain; that stretch reads GFDCPFGWSS…TRYPVCKFXG (125 aa). Intrachain disulfides connect cysteine 4/cysteine 15, cysteine 32/cysteine 121, and cysteine 98/cysteine 113.

This sequence belongs to the snaclec family. In terms of assembly, heterotetramer of the subunits alpha, alpha', beta and beta'; disulfide-linked. Expressed by the venom gland.

The protein resides in the secreted. Functionally, potent platelet activator that aggregates platelets via both GPIbalpha (GP1BA) and GPVI (GP6). Induces a tyrosine phosphorylation profile in platelets that resembles this produced by collagen, involving the time dependent tyrosine phosphorylation of Fc receptor gamma chain (FCGR1A), phospholipase Cgamma2 (PLCG2), and LAT. This Trimeresurus albolabris (White-lipped pit viper) protein is Snaclec alboaggregin-A subunit beta.